The sequence spans 130 residues: MPKQVIIPPGTTTPIAPFVPGTLADGVVYVSGTLPFDKQNNVVHIGDPKAQTRHVLETIKSVIETAGGSMADVTFNSIFITDWTNYAAINEVYAEFFPGDKPARFCIQCGLVKPDALVEIASVAHIGAPT.

This sequence belongs to the RutC family.

The enzyme catalyses (Z)-3-aminoacrylate + H2O + H(+) = 3-oxopropanoate + NH4(+). In terms of biological role, involved in pyrimidine catabolism. Catalyzes the deamination of 3-aminoacrylate to malonic semialdehyde, a reaction that can also occur spontaneously. RutC may facilitate the reaction and modulate the metabolic fitness, rather than catalyzing essential functions. The chain is 3-aminoacrylate deaminase RutC from Klebsiella pneumoniae (strain 342).